The chain runs to 477 residues: Ribulose bisphosphate carboxylase large chain (477 aa).

Positions 1–2 (MS) are excised as a propeptide. Pro3 bears the N-acetylproline mark. Residue Lys14 is modified to N6,N6,N6-trimethyllysine. A substrate-binding site is contributed by Thr173. Lys175 serves as the catalytic Proton acceptor. A substrate-binding site is contributed by Lys177. Residues Lys201, Asp203, and Glu204 each coordinate Mg(2+). Residue Lys201 is modified to N6-carboxylysine. His294 acts as the Proton acceptor in catalysis. Arg295, His327, and Ser379 together coordinate substrate.

It belongs to the RuBisCO large chain family. Type I subfamily. Heterohexadecamer of 8 large chains and 8 small chains; disulfide-linked. The disulfide link is formed within the large subunit homodimers. Mg(2+) serves as cofactor. Post-translationally, the disulfide bond which can form in the large chain dimeric partners within the hexadecamer appears to be associated with oxidative stress and protein turnover.

It localises to the plastid. The protein resides in the chloroplast. It carries out the reaction 2 (2R)-3-phosphoglycerate + 2 H(+) = D-ribulose 1,5-bisphosphate + CO2 + H2O. The catalysed reaction is D-ribulose 1,5-bisphosphate + O2 = 2-phosphoglycolate + (2R)-3-phosphoglycerate + 2 H(+). Its function is as follows. RuBisCO catalyzes two reactions: the carboxylation of D-ribulose 1,5-bisphosphate, the primary event in carbon dioxide fixation, as well as the oxidative fragmentation of the pentose substrate in the photorespiration process. Both reactions occur simultaneously and in competition at the same active site. The sequence is that of Ribulose bisphosphate carboxylase large chain from Gerbera jamesonii (Transvaal daisy).